The following is a 114-amino-acid chain: U17-barytoxin-Tl1a (114 aa).

Positions 1-20 (MKTIIVFLSLLVLATKFGDA) are cleaved as a signal peptide. The propeptide occupies 21–74 (NEGVNQEQMKEVIQNEFREDFLNEMAAMSLLQQLEAIESTLLEKEADRNSRQKR). Intrachain disulfides connect cysteine 75–cysteine 88, cysteine 82–cysteine 93, and cysteine 87–cysteine 108.

The protein belongs to the neurotoxin 14 (magi-1) family. 03 (ICK-30-40) subfamily. In terms of tissue distribution, expressed by the venom gland.

Its subcellular location is the secreted. Its function is as follows. Ion channel inhibitor. This chain is U17-barytoxin-Tl1a, found in Trittame loki (Brush-footed trapdoor spider).